The sequence spans 150 residues: PTTG1IP family member 2 (150 aa).

Residues 1 to 19 (MCWLRAWSHILLPVFLSVA) form the signal peptide. The Extracellular segment spans residues 20–98 (LIQLIFNLSD…SIFWANCNVD (79 aa)). A glycan (N-linked (GlcNAc...) asparagine) is linked at N26. A helical transmembrane segment spans residues 99–119 (LFGIVMLILIVILALAFLWYC). At 120–150 (LAYYFYMQQHMALYARHGQVPVYNWDAPGDW) the chain is on the cytoplasmic side.

The protein resides in the membrane. This Mus musculus (Mouse) protein is PTTG1IP family member 2.